Reading from the N-terminus, the 134-residue chain is DNA-binding protein inhibitor ID-2 (134 aa).

Phosphoserine occurs at positions 14 and 25. One can recognise a bHLH domain in the interval 23-75; it reads SRSKTPVDDPMSLLYNMNDCYSKLKELVPSIPQNKKVSKMEILQHVIDYILDL. Residues 106 to 115 carry the Nuclear export signal motif; the sequence is LNTDISILSL.

As to quaternary structure, interacts with GATA4 and NKX2-5. Interacts with NR0B2. Interacts with CLOCK and BMAL1. Interacts with IFI204. Interacts with NEDD9/HEF1. Interacts with ASB4; this interaction promotes ID2 proteasomal degradation. In terms of processing, ubiquitinated in a ASB4-depedent manner, leading to proteasomal degradation. Phosphorylated in vitro by CDK1, PKA and PKC.

The protein localises to the cytoplasm. It is found in the nucleus. In terms of biological role, transcriptional regulator (lacking a basic DNA binding domain) which negatively regulates the basic helix-loop-helix (bHLH) transcription factors by forming heterodimers and inhibiting their DNA binding and transcriptional activity. Implicated in regulating a variety of cellular processes, including cellular growth, senescence, differentiation, apoptosis, angiogenesis, and neoplastic transformation. Inhibits skeletal muscle and cardiac myocyte differentiation. Regulates the circadian clock by repressing the transcriptional activator activity of the CLOCK-BMAL1 heterodimer. Restricts the CLOCK and BMAL1 localization to the cytoplasm. Plays a role in both the input and output pathways of the circadian clock: in the input component, is involved in modulating the magnitude of photic entrainment and in the output component, contributes to the regulation of a variety of liver clock-controlled genes involved in lipid metabolism. The protein is DNA-binding protein inhibitor ID-2 (ID2) of Sus scrofa (Pig).